The chain runs to 310 residues: MDFVAGAIGGVCGVAVGYPLDTVKVKIQTEAKYTSIWHCVRDTYRQERLWGFYRGLSLPVCTVSLVSSVSFGTYHHCLAHICRFRYGSTDVKPTKADITLSGCASGLVRVFLTSPTEVAKVRLQTQAQSQTQQRRPSASWTSVAPALCPAPTACLEPRPKYSGPLHCLVTVAREEGLRGLYKGSSALLLREGHSFATYFLSYAVLSEWLTPAGQSQPDVLGVLVAGGCAGVLAWAVATPMDVIKSRLQADGQGQQRYRGLLHCVVTSVREEGPRVLFKGLALNCCRAFPVNMVVFVAYEAVLRLTQGLLT.

Solcar repeat units follow at residues 1–80 (MDFV…CLAH), 93–208 (PTKA…LSEW), and 217–304 (PDVL…VLRL). 6 helical membrane passes run 3–23 (FVAG…LDTV), 49–69 (LWGF…VSSV), 98–116 (ITLS…TSPT), 192–212 (GHSF…LTPA), 219–239 (VLGV…VATP), and 275–295 (VLFK…MVVF).

Belongs to the mitochondrial carrier (TC 2.A.29) family.

The protein localises to the mitochondrion inner membrane. Its subcellular location is the mitochondrion outer membrane. The catalysed reaction is NAD(+)(in) = NAD(+)(out). The enzyme catalyses acetyl-CoA(in) = acetyl-CoA(out). Functionally, mitochondrial NAD(+) transporter that acts as a 'metabolic gate' in hepatic lipogenesis. Provides NAD(+) substrate to mitochondrial SIRT3 deacetylase and enables its NAD(+)-dependent activities in mitochondrial energy metabolism. This triggers downstream activation of PRKAA1/AMPK-alpha signaling cascade that negatively regulates sterol regulatory element-binding protein (SREBP) transcriptional activities and ATP-consuming lipogenesis to restore cellular energy balance. May transport other mitochondrial metabolites having an aromatic nucleotide and phosphate groups, such as acetyl-CoA. Does not transport amino acids. The transport mechanism remains to be elucidated. The polypeptide is Solute carrier family 25 member 47 (Rattus norvegicus (Rat)).